We begin with the raw amino-acid sequence, 430 residues long: MAQLQAVKGTRDIFPDEIARWHYVEGVIRSVAELYGFSEVRTPVFEYTELFQRGIGATTDIVGKEMFTFQPDPNGRSLTLRPEMTAGVMRACLQKNLLSQSPVSKLYYISDLFRKERPQAGRQRQFTQFGAELLGVSNPAAVAEVLTFMMQVFSSLGLHGLRLRINSLGDLDDRARYREALRDYFMPYQNDLDEPSKERLEKNPLRILDSKNPALQEMIAGAPRLYASLKPESVADFEKVLSYLDDRQIAYDVDHLLVRGLDYYCHAAFEVTSSELGAQDAIGGGGRYDGLARELGASNDLPAVGFAVGMERLMIAMEKQGLFATLNPHGPLVYVVVQQKELTDHAMQVAFRLRKSGLKTEIDLAGRSMKAQMRDANRMGAAYALFIGQSEMESGHYALKNLETSEQTSLDLDAIIEVLHEAVSQESARP.

It belongs to the class-II aminoacyl-tRNA synthetase family. Homodimer.

It localises to the cytoplasm. It carries out the reaction tRNA(His) + L-histidine + ATP = L-histidyl-tRNA(His) + AMP + diphosphate + H(+). This is Histidine--tRNA ligase from Chlorobaculum parvum (strain DSM 263 / NCIMB 8327) (Chlorobium vibrioforme subsp. thiosulfatophilum).